Consider the following 586-residue polypeptide: Phosphomethylpyrimidine synthase (586 aa).

A disordered region spans residues methionine 1 to proline 59. The span at valine 22–glutamate 39 shows a compositional bias: basic and acidic residues. Residues asparagine 193, methionine 222, tyrosine 251, histidine 287, serine 307 to glycine 309, aspartate 348 to arginine 351, and glutamate 387 each bind substrate. Position 391 (histidine 391) interacts with Zn(2+). Substrate is bound at residue tyrosine 414. Histidine 455 contributes to the Zn(2+) binding site. The [4Fe-4S] cluster site is built by cysteine 535, cysteine 538, and cysteine 543.

Belongs to the ThiC family. [4Fe-4S] cluster serves as cofactor.

The enzyme catalyses 5-amino-1-(5-phospho-beta-D-ribosyl)imidazole + S-adenosyl-L-methionine = 4-amino-2-methyl-5-(phosphooxymethyl)pyrimidine + CO + 5'-deoxyadenosine + formate + L-methionine + 3 H(+). It participates in cofactor biosynthesis; thiamine diphosphate biosynthesis. In terms of biological role, catalyzes the synthesis of the hydroxymethylpyrimidine phosphate (HMP-P) moiety of thiamine from aminoimidazole ribotide (AIR) in a radical S-adenosyl-L-methionine (SAM)-dependent reaction. This Bacillus cereus (strain ATCC 10987 / NRS 248) protein is Phosphomethylpyrimidine synthase.